The sequence spans 519 residues: 2,3-bisphosphoglycerate-independent phosphoglycerate mutase (519 aa).

Residues D18 and S68 each coordinate Mn(2+). The Phosphoserine intermediate role is filled by S68. Substrate-binding positions include H129, 159–160 (RD), R191, R197, 267–270 (RADR), and K341. Positions 408, 412, 449, 450, and 468 each coordinate Mn(2+).

Belongs to the BPG-independent phosphoglycerate mutase family. As to quaternary structure, monomer. Requires Mn(2+) as cofactor.

It carries out the reaction (2R)-2-phosphoglycerate = (2R)-3-phosphoglycerate. It participates in carbohydrate degradation; glycolysis; pyruvate from D-glyceraldehyde 3-phosphate: step 3/5. Catalyzes the interconversion of 2-phosphoglycerate and 3-phosphoglycerate. The polypeptide is 2,3-bisphosphoglycerate-independent phosphoglycerate mutase (Coxiella burnetii (strain Dugway 5J108-111)).